The following is a 288-amino-acid chain: Acetyl-coenzyme A carboxylase carboxyl transferase subunit beta (288 aa).

The CoA carboxyltransferase N-terminal domain maps to 32 to 288 (LFAKCPACKH…LELHTEVENV (257 aa)). Cysteine 36, cysteine 39, cysteine 54, and cysteine 57 together coordinate Zn(2+). Residues 36–57 (CPACKHTIYQKDLGKNKVCPNC) form a C4-type zinc finger.

This sequence belongs to the AccD/PCCB family. In terms of assembly, acetyl-CoA carboxylase is a heterohexamer composed of biotin carboxyl carrier protein (AccB), biotin carboxylase (AccC) and two subunits each of ACCase subunit alpha (AccA) and ACCase subunit beta (AccD). Zn(2+) serves as cofactor.

It localises to the cytoplasm. The catalysed reaction is N(6)-carboxybiotinyl-L-lysyl-[protein] + acetyl-CoA = N(6)-biotinyl-L-lysyl-[protein] + malonyl-CoA. It participates in lipid metabolism; malonyl-CoA biosynthesis; malonyl-CoA from acetyl-CoA: step 1/1. Component of the acetyl coenzyme A carboxylase (ACC) complex. Biotin carboxylase (BC) catalyzes the carboxylation of biotin on its carrier protein (BCCP) and then the CO(2) group is transferred by the transcarboxylase to acetyl-CoA to form malonyl-CoA. The chain is Acetyl-coenzyme A carboxylase carboxyl transferase subunit beta from Lactococcus lactis subsp. lactis (strain IL1403) (Streptococcus lactis).